The following is a 2195-amino-acid chain: Integrator complex subunit 1 (2195 aa).

A disordered region spans residues 1–86 (MNRAKPTTVR…RPKLSSTPPL (86 aa)). S13 is subject to Phosphoserine. A compositionally biased stretch (polar residues) spans 34 to 45 (GQASESKTTSTL). N6-acetyllysine is present on K47. A compositionally biased stretch (low complexity) spans 62–75 (SASLSGTSALTGLT). T83 carries the post-translational modification Phosphothreonine. Position 87 is a phosphoserine (S87). The tract at residues 267–297 (LLQGEGARSGGELGAGSSPHPSLTEEEDSQT) is disordered. 2 positions are modified to phosphoserine: S307 and S926. Positions 923 to 947 (STASGEEDDEGESREQKAKKRQRQQ) are disordered. The helical transmembrane segment at 1165 to 1185 (HILVVHAMVILLTLGPPRSGD) threads the bilayer. Residues 1313 to 1347 (SLPPRRDSTEAPKPESSPEPPPGQGRTRAGTQVPV) are disordered. The span at 1316 to 1325 (PRRDSTEAPK) shows a compositional bias: basic and acidic residues. Residues S1320, S1328, and S1329 each carry the phosphoserine modification.

The protein belongs to the Integrator subunit 1 family. As to quaternary structure, component of the Integrator complex, composed of core subunits INTS1, INTS2, INTS3, INTS4, INTS5, INTS6, INTS7, INTS8, INTS9/RC74, INTS10, INTS11/CPSF3L, INTS12, INTS13, INTS14 and INTS15. The core complex associates with protein phosphatase 2A subunits PPP2CA and PPP2R1A, to form the Integrator-PP2A (INTAC) complex. Interacts with ESRRB, ESRRB is not a core component of the Integrator complex and this association is a bridge for the interaction with the multiprotein complex Integrator; attracts the transcriptional machinery.

Its subcellular location is the nucleus. The protein resides in the nucleus membrane. In terms of biological role, component of the integrator complex, a multiprotein complex that terminates RNA polymerase II (Pol II) transcription in the promoter-proximal region of genes. The integrator complex provides a quality checkpoint during transcription elongation by driving premature transcription termination of transcripts that are unfavorably configured for transcriptional elongation: the complex terminates transcription by (1) catalyzing dephosphorylation of the C-terminal domain (CTD) of Pol II subunit POLR2A/RPB1 and SUPT5H/SPT5, (2) degrading the exiting nascent RNA transcript via endonuclease activity and (3) promoting the release of Pol II from bound DNA. The integrator complex is also involved in terminating the synthesis of non-coding Pol II transcripts, such as enhancer RNAs (eRNAs), small nuclear RNAs (snRNAs), telomerase RNAs and long non-coding RNAs (lncRNAs). Within the integrator complex, INTS1 is involved in the post-termination step: INTS1 displaces INTS3 and the SOSS factors, allowing the integrator complex to return to the closed conformation, ready to bind to the paused elongation complex for another termination cycle. Mediates recruitment of cytoplasmic dynein to the nuclear envelope, probably as component of the integrator complex. The chain is Integrator complex subunit 1 from Mus musculus (Mouse).